The sequence spans 506 residues: MNSEFSVGLSNTISSLFKDDEDYQIVQASELLTYLSNKGFYPPLVIQNIMIDILESERSNDPAVVYNIIKVLNSLKDEGYRIELENWDLIISVFISLNIHLSRPNSSSPPTTTTTTTTTGERAGKKLKTESSPTLSSSSLATSSRGVNTVSDSVAKIPFLSSKVLATYFISIYESMNMVTSSFTDSHPLHRLFKVGNRAHILFSEVMSIIDNCDHDTLREMSKFVTLIYRGGKSWEDSILPSISQGFRNIKRCYRRALFCQLMPFGDEKTKLLKGMLEYFYPTGSGNEFVGFNKRKRGGTKELIEELTPWFKKISTKAIKHCSKTPSSDDQFYDSYNYHDNQNDDNDTNYLNLESPIGEIEVFVIMICQLFQSTIISSTKQYGLKLKNQVQNKQQQQQQKLTSIIKDEDKNEKENKSENEEKEKEKEKEKEKEKEKEKEKEKENEEGEEDNGDQLPYQVPWQTVYEQFKEFSKTILTTCEKICKNRTLIESNLNGVETILKFKSTP.

Disordered stretches follow at residues 104–144 (PNSS…ATSS) and 397–456 (QQQK…DQLP). The segment covering 130-144 (ESSPTLSSSSLATSS) has biased composition (low complexity). Residues 405 to 443 (IKDEDKNEKENKSENEEKEKEKEKEKEKEKEKEKEKEKE) are compositionally biased toward basic and acidic residues. The stretch at 405 to 455 (IKDEDKNEKENKSENEEKEKEKEKEKEKEKEKEKEKEKENEEGEEDNGDQL) forms a coiled coil.

This is an uncharacterized protein from Dictyostelium discoideum (Social amoeba).